Here is a 465-residue protein sequence, read N- to C-terminus: Endo-1,3-1,4-beta-glycanase ExsH (465 aa).

3 Hemolysin-type calcium-binding repeats span residues 33-50 (HGTA…VNVT), 105-122 (FGNE…TQTI), and 123-140 (DGRG…ADTF). The region spanning 206–462 (AHQFRLSLDR…YIKAYSLDAD (257 aa)) is the GH16 domain. The active-site Nucleophile is Glu-349. Glu-354 functions as the Proton donor in the catalytic mechanism.

Belongs to the glycosyl hydrolase 16 family.

Its subcellular location is the secreted. It functions in the pathway glycan metabolism; exopolysaccharide biosynthesis. In terms of biological role, cleaves high molecular weight succinoglycan to yield LMW succinoglycan. Dynamically regulates the molecular weight distribution of succinoglycan by cleaving nascent succinoglycan only during a limited period after its synthesis, perhaps before it undergoes a time-dependent change in its conformation or aggregation state. The protein is Endo-1,3-1,4-beta-glycanase ExsH (exsH) of Rhizobium meliloti (strain 1021) (Ensifer meliloti).